We begin with the raw amino-acid sequence, 20 residues long: ILGPVLSLVGNALGGLLKNE.

Belongs to the bombinin family. In terms of tissue distribution, expressed by the skin glands.

It is found in the secreted. Its function is as follows. Has antimicrobial activity. This Bombina maxima (Giant fire-bellied toad) protein is Maximin-Hu.